Reading from the N-terminus, the 110-residue chain is uncharacterized protein (110 aa).

This is an uncharacterized protein from Human cytomegalovirus (strain AD169) (HHV-5).